The sequence spans 447 residues: Cytochrome P450 monooxygenase aunB (447 aa).

A heme-binding site is contributed by C386.

The protein belongs to the cytochrome P450 family. Requires heme as cofactor.

It catalyses the reaction 2 fonsecin B + NADPH + O2 + H(+) = aurasperone B + NADP(+) + 2 H2O. It carries out the reaction 2 rubrofusarin B + NADPH + O2 + H(+) = aurasperone A + NADP(+) + 2 H2O. Its pathway is secondary metabolite biosynthesis. Its function is as follows. Cytochrome P450 monooxygenase; part of the gene cluster that mediates the biosynthesis of aurasperone B, a dimeric gamma-naphthopyrone. The first step in the biosynthesis of aurasperone B is the production of gamma-naphthopyrone precursor YWA1 by the non-reducing polyketide synthase albA, via condensation of one acetyl-CoA starter unit with 6 malonyl-CoA units. YWA1 is then methylated by aunE at position C-6 to yield foncesin which is further methylated at position C-8 by aunD to produce fonsecin B. A key enzyme in the biosynthetic pathway is the cytochrome P450 monooxygenase aunB which catalyzes the oxidative dimerization of fonsecin B to aurasperone B. AunB also catalyzes the oxidative dimerization of rubrofusarin B into aurasperone A. This Aspergillus niger (strain ATCC MYA-4892 / CBS 513.88 / FGSC A1513) protein is Cytochrome P450 monooxygenase aunB.